The chain runs to 612 residues: Dihydroxy-acid dehydratase (612 aa).

A Mg(2+)-binding site is contributed by Asp-81. Position 122 (Cys-122) interacts with [2Fe-2S] cluster. 2 residues coordinate Mg(2+): Asp-123 and Lys-124. Position 124 is an N6-carboxylysine (Lys-124). Cys-195 contacts [2Fe-2S] cluster. Glu-491 lines the Mg(2+) pocket. The active-site Proton acceptor is Ser-517.

The protein belongs to the IlvD/Edd family. As to quaternary structure, homodimer. Requires [2Fe-2S] cluster as cofactor. The cofactor is Mg(2+).

It catalyses the reaction (2R)-2,3-dihydroxy-3-methylbutanoate = 3-methyl-2-oxobutanoate + H2O. The enzyme catalyses (2R,3R)-2,3-dihydroxy-3-methylpentanoate = (S)-3-methyl-2-oxopentanoate + H2O. It participates in amino-acid biosynthesis; L-isoleucine biosynthesis; L-isoleucine from 2-oxobutanoate: step 3/4. Its pathway is amino-acid biosynthesis; L-valine biosynthesis; L-valine from pyruvate: step 3/4. In terms of biological role, functions in the biosynthesis of branched-chain amino acids. Catalyzes the dehydration of (2R,3R)-2,3-dihydroxy-3-methylpentanoate (2,3-dihydroxy-3-methylvalerate) into 2-oxo-3-methylpentanoate (2-oxo-3-methylvalerate) and of (2R)-2,3-dihydroxy-3-methylbutanoate (2,3-dihydroxyisovalerate) into 2-oxo-3-methylbutanoate (2-oxoisovalerate), the penultimate precursor to L-isoleucine and L-valine, respectively. In Rhizobium leguminosarum bv. trifolii (strain WSM2304), this protein is Dihydroxy-acid dehydratase.